Reading from the N-terminus, the 86-residue chain is Large ribosomal subunit protein eL20 (86 aa).

The protein belongs to the eukaryotic ribosomal protein eL20 family. Part of the 50S ribosomal subunit. Binds 23S rRNA.

In Saccharolobus solfataricus (strain ATCC 35092 / DSM 1617 / JCM 11322 / P2) (Sulfolobus solfataricus), this protein is Large ribosomal subunit protein eL20.